The chain runs to 216 residues: Protein-L-isoaspartate O-methyltransferase (216 aa).

Residue serine 60 is part of the active site.

This sequence belongs to the methyltransferase superfamily. L-isoaspartyl/D-aspartyl protein methyltransferase family.

The protein resides in the cytoplasm. It catalyses the reaction [protein]-L-isoaspartate + S-adenosyl-L-methionine = [protein]-L-isoaspartate alpha-methyl ester + S-adenosyl-L-homocysteine. Catalyzes the methyl esterification of L-isoaspartyl residues in peptides and proteins that result from spontaneous decomposition of normal L-aspartyl and L-asparaginyl residues. It plays a role in the repair and/or degradation of damaged proteins. The sequence is that of Protein-L-isoaspartate O-methyltransferase from Methanococcus aeolicus (strain ATCC BAA-1280 / DSM 17508 / OCM 812 / Nankai-3).